A 369-amino-acid polypeptide reads, in one-letter code: Cytochrome b561 and DOMON domain-containing protein At3g07570 (369 aa).

A signal peptide spans 1–22 (MKLYSVSIIIFVLIALSTIVNA). The DOMON domain occupies 55-167 (QNFILRYART…PRQSLLYAVG (113 aa)). The 196-residue stretch at 174-369 (SSPDFRLREH…GLEVRKFLKK (196 aa)) folds into the Cytochrome b561 domain. The helical transmembrane segment at 212–232 (THGLMNMFGWGILIIVGAIVA) threads the bilayer. Residues His213 and His246 each contribute to the heme b site. The next 2 membrane-spanning stretches (helical) occupy residues 247–267 (IALQ…GLVL) and 279–299 (HKGL…ALLA). 2 residues coordinate heme b: His279 and His315. Helical transmembrane passes span 321-341 (LLII…KAGT) and 343-363 (WNGG…GLEV).

The cofactor is heme b.

It localises to the membrane. May act as a catecholamine-responsive trans-membrane electron transporter. The polypeptide is Cytochrome b561 and DOMON domain-containing protein At3g07570 (Arabidopsis thaliana (Mouse-ear cress)).